A 480-amino-acid chain; its full sequence is Lysostaphin (480 aa).

The N-terminal stretch at 1-23 (MKKTKNNYYTTPLAIGLSTFALA) is a signal peptide. Residues 24 to 234 (SIVYGGIQNE…ALVQNRTALR (211 aa)) constitute a propeptide that is removed on maturation. 13 tandem repeats follow at residues 49-61 (AEVE…VENT), 62-74 (AEVE…VENT), 75-87 (AEVE…VENT), 88-100 (AEVE…VENT), 101-113 (AEVE…VENT), 114-126 (AEVE…VENT), 127-139 (AEVE…VENT), 140-152 (AEVE…VENT), 153-165 (AEVE…VENT), 166-178 (AEVE…VENT), 179-191 (AEVE…VENT), 192-204 (AEVE…VENT), and 205-217 (AEVE…VENT). The 14 X 13 AA tandem repeats of A-E-V-E-T-S-K-[AP]-P-V-E-N-T stretch occupies residues 49–230 (AEVETSKPPV…ETSKALVQNR (182 aa)). A disordered region spans residues 51–219 (VETSKPPVEN…SKAPVENTAE (169 aa)). The stretch at 218–230 (AEVETSKALVQNR) is one 14; approximate repeat. The Zn(2+) site is built by histidine 266 and aspartate 270. The active site involves histidine 347. Histidine 349 is a binding site for Zn(2+). Positions 400-468 (SESASFTPNT…YLPVRTWNKS (69 aa)) constitute an SH3b domain.

This sequence belongs to the peptidase M23B family. Monomer. Zn(2+) is required as a cofactor.

It is found in the secreted. The catalysed reaction is Hydrolysis of the -Gly-|-Gly- bond in the pentaglycine inter-peptide link joining staphylococcal cell wall peptidoglycans.. Lyses staphylococcal cells by hydrolyzing the polyglycine interpeptide bridges of the peptidoglycan. The polypeptide is Lysostaphin (lss) (Staphylococcus staphylolyticus).